The following is a 564-amino-acid chain: Threonine--tRNA ligase (564 aa).

The interval 167 to 464 (DHRSLGKQLE…LLEKTSGNFP (298 aa)) is catalytic. Positions 260, 311, and 441 each coordinate Zn(2+).

This sequence belongs to the class-II aminoacyl-tRNA synthetase family. In terms of assembly, homodimer. Zn(2+) is required as a cofactor.

It localises to the cytoplasm. The enzyme catalyses tRNA(Thr) + L-threonine + ATP = L-threonyl-tRNA(Thr) + AMP + diphosphate + H(+). Catalyzes the attachment of threonine to tRNA(Thr) in a two-step reaction: L-threonine is first activated by ATP to form Thr-AMP and then transferred to the acceptor end of tRNA(Thr). Also edits incorrectly charged L-seryl-tRNA(Thr). The sequence is that of Threonine--tRNA ligase from Mycoplasma genitalium (strain ATCC 33530 / DSM 19775 / NCTC 10195 / G37) (Mycoplasmoides genitalium).